A 429-amino-acid polypeptide reads, in one-letter code: Intraflagellar transport protein 57 homolog (429 aa).

Residues 305 to 369 are a coiled coil; sequence KYINNQLEHL…MEEKGSSMTD (65 aa). A pDED region spans residues 335 to 426; the sequence is GNGGVTERTR…HAAVTPESAI (92 aa).

The protein belongs to the IFT57 family. As to quaternary structure, component of the IFT complex B, at least composed of IFT20, IFT22, IFT25, IFT27, IFT46, IFT52, TRAF3IP1/IFT54, IFT57, IFT74, IFT80, IFT81, and IFT88. Interacts with IFT20. Interacts with IFT88. Interacts with IFT80, IFT-81, IFT74, IFT172, IFT70B and KIF17. Interacts with BLOC1S2. Interacts with RYBP. Interacts with HOMER1; the interaction possibly prevents the pro-apoptotic effects of IFT57. Interacts with HIP1. In normal conditions, it poorly interacts with HIP1, HIP1 being strongly associated with HTT. However, in mutant HTT proteins with a long poly-Gln region, interaction between HTT and HIP1 is inhibited, promoting the interaction between HIP1 and IFT57, leading to apoptosis. Interacts with BFAR. Interacts with TTC25. Interacts with USH1G. Present in retina and testis. In brain, it is present in the cortex, striatum, globus pallidus, hypothalamus and cerebellum. Present at high level in neurons and neuropil throughout the brain (at protein level). Expressed in hippocampal neurons, where it colocalizes with HOMER1 at postsynaptic regions.

It is found in the cell projection. It localises to the cilium. Its subcellular location is the cytoplasm. The protein resides in the cytoskeleton. The protein localises to the cilium basal body. It is found in the golgi apparatus. In terms of biological role, required for the formation of cilia. Plays an indirect role in sonic hedgehog signaling, cilia being required for all activity of the hedgehog pathway. Has pro-apoptotic function via its interaction with HIP1, leading to recruit caspase-8 (CASP8) and trigger apoptosis. Has the ability to bind DNA sequence motif 5'-AAAGACATG-3' present in the promoter of caspase genes such as CASP1, CASP8 and CASP10, suggesting that it may act as a transcription regulator; however the relevance of such function remains unclear. This chain is Intraflagellar transport protein 57 homolog (Ift57), found in Mus musculus (Mouse).